The primary structure comprises 385 residues: Lipid-A-disaccharide synthase (385 aa).

It belongs to the LpxB family.

The catalysed reaction is a lipid X + a UDP-2-N,3-O-bis[(3R)-3-hydroxyacyl]-alpha-D-glucosamine = a lipid A disaccharide + UDP + H(+). It participates in bacterial outer membrane biogenesis; LPS lipid A biosynthesis. In terms of biological role, condensation of UDP-2,3-diacylglucosamine and 2,3-diacylglucosamine-1-phosphate to form lipid A disaccharide, a precursor of lipid A, a phosphorylated glycolipid that anchors the lipopolysaccharide to the outer membrane of the cell. The polypeptide is Lipid-A-disaccharide synthase (Xylella fastidiosa (strain M12)).